The primary structure comprises 64 residues: U-poneritoxin(01)-Om1a (64 aa).

The first 27 residues, 1–27 (MKPSGLTFAFLVVFMMAIMYNSVQVTA), serve as a signal peptide directing secretion. The propeptide occupies 28 to 45 (DADADAEAEALANALAEA). The residue at position 62 (methionine 62) is a Methionine amide.

Truncated sequences of this peptide have also been found in the venom. It is possible they have been cleaved in the venom. As to expression, expressed by the venom gland.

The protein resides in the secreted. Functionally, antimicrobial peptide with activities against E.coli (MIC=1.3 uM), S.aureus (MIC=3.1 uM), and S.cerevisiae (MIC=50 uM). Also shows histamine-releasing activity (32.9% at 10 uM). Does not show hemolytic activity, even at 50 uM. It is a short peptide for which no alpha-helical region has been predicted. The protein is U-poneritoxin(01)-Om1a of Odontomachus monticola (Trap-jaw ant).